A 398-amino-acid polypeptide reads, in one-letter code: Chalcone synthase (398 aa).

The active site involves C167.

This sequence belongs to the thiolase-like superfamily. Chalcone/stilbene synthases family.

It catalyses the reaction (E)-4-coumaroyl-CoA + 3 malonyl-CoA + 3 H(+) = 2',4,4',6'-tetrahydroxychalcone + 3 CO2 + 4 CoA. It participates in secondary metabolite biosynthesis; flavonoid biosynthesis. The primary product of this enzyme is 4,2',4',6'-tetrahydroxychalcone (also termed naringenin-chalcone or chalcone) which can under specific conditions spontaneously isomerize into naringenin. This chain is Chalcone synthase (CHS), found in Callistephus chinensis (China aster).